We begin with the raw amino-acid sequence, 370 residues long: Histidinol-phosphate aminotransferase 2 (370 aa).

K230 is subject to N6-(pyridoxal phosphate)lysine.

This sequence belongs to the class-II pyridoxal-phosphate-dependent aminotransferase family. Histidinol-phosphate aminotransferase subfamily. As to quaternary structure, homodimer. Requires pyridoxal 5'-phosphate as cofactor.

The catalysed reaction is L-histidinol phosphate + 2-oxoglutarate = 3-(imidazol-4-yl)-2-oxopropyl phosphate + L-glutamate. The protein operates within amino-acid biosynthesis; L-histidine biosynthesis; L-histidine from 5-phospho-alpha-D-ribose 1-diphosphate: step 7/9. In Pseudomonas fluorescens (strain Pf0-1), this protein is Histidinol-phosphate aminotransferase 2.